The following is a 273-amino-acid chain: HLA class II histocompatibility antigen, DO beta chain (273 aa).

Residues 1-26 (MGSGWVPWVVALLVNLTRLDSSMTQG) form the signal peptide. Positions 27 to 120 (TDSPEDFVIQ…LGAPFTVGRK (94 aa)) are beta-1. The Extracellular segment spans residues 27–224 (TDSPEDFVIQ…RAQSEYSWRK (198 aa)). Intrachain disulfides connect Cys-41–Cys-105 and Cys-143–Cys-199. N-linked (GlcNAc...) asparagine glycosylation is present at Asn-45. The beta-2 stretch occupies residues 121 to 214 (VQPEVTVYPE…SLLSPVSVEW (94 aa)). An Ig-like C1-type domain is found at 123–213 (PEVTVYPERT…SSLLSPVSVE (91 aa)). The interval 215 to 224 (RAQSEYSWRK) is connecting peptide. A helical membrane pass occupies residues 225 to 245 (MLSGIAAFLLGLIFLLVGIVI). At 246 to 273 (QLRAQKGYVRTQMSGNEVSRAVLLPQSC) the chain is on the cytoplasmic side.

This sequence belongs to the MHC class II family. Heterodimer of an alpha chain (DOA) and a beta chain (DOB). Forms a heterotetrameric complex with an HLA-DM molecule during intracellular transport in endosomal/lysosomal compartments in B-cells.

It is found in the endosome membrane. Its subcellular location is the lysosome membrane. Its function is as follows. Important modulator in the HLA class II restricted antigen presentation pathway by interaction with the HLA-DM molecule in B-cells. Modifies peptide exchange activity of HLA-DM. This is HLA class II histocompatibility antigen, DO beta chain (HLA-DOB) from Homo sapiens (Human).